A 96-amino-acid polypeptide reads, in one-letter code: Muconolactone Delta-isomerase (96 aa).

This sequence belongs to the muconolactone Delta-isomerase family. As to quaternary structure, homodecamer.

The catalysed reaction is (S)-muconolactone = (4,5-dihydro-5-oxofuran-2-yl)-acetate. It participates in aromatic compound metabolism; beta-ketoadipate pathway; 5-oxo-4,5-dihydro-2-furylacetate from catechol: step 3/3. This chain is Muconolactone Delta-isomerase (catC), found in Pseudomonas putida (Arthrobacter siderocapsulatus).